Consider the following 1037-residue polypeptide: Presequence protease, mitochondrial (1037 aa).

A mitochondrion-targeting transit peptide spans 1 to 15 (MWRCGGRQGLGVLRR). Residue His104 participates in Zn(2+) binding. The active-site Proton acceptor is Glu107. Residues His108 and Glu205 each contribute to the Zn(2+) site. Residues Cys119 and Cys556 are joined by a disulfide bond. The residue at position 759 (Lys759) is an N6-acetyllysine. An N6-acetyllysine; alternate modification is found at Lys770. Lys770 is modified (N6-succinyllysine; alternate). The tract at residues 803–834 (IGRSKKERRPVRPHTVEKPVPSSSGGDAHVPH) is disordered. The span at 804-814 (GRSKKERRPVR) shows a compositional bias: basic residues. Position 849 is an N6-succinyllysine (Lys849). At Lys884 the chain carries N6-acetyllysine. An N6-succinyllysine modification is found at Lys946.

It belongs to the peptidase M16 family. PreP subfamily. Monomer and homodimer; homodimerization is induced by binding of the substrate. It depends on Zn(2+) as a cofactor. In terms of processing, a disulfide bond locks the enzyme in the closed conformation preventing substrate entry into the catalytic chamber.

It is found in the mitochondrion matrix. Its activity is regulated as follows. Mainly exists in a closed and catalytically competent conformation but a closed-to-open switch allows substrate entry into the catalytic chamber. Substrate binding induces closure and dimerization. A disulfide bond may lock the enzyme in a closed conformation preventing substrate entry into the catalytic chamber, participating in redox regulation of the enzyme. Inhibited by metal-chelating agents. Inhibited by nickel and zinc excess, and slightly activated by manganese. Its function is as follows. Metalloendopeptidase of the mitochondrial matrix that functions in peptide cleavage and degradation rather than in protein processing. Has an ATP-independent activity. Specifically cleaves peptides in the range of 5 to 65 residues. Shows a preference for cleavage after small polar residues and before basic residues, but without any positional preference. Degrades the transit peptides of mitochondrial proteins after their cleavage. Also degrades other unstructured peptides. It is also able to degrade amyloid-beta protein 40, one of the peptides produced by APP processing, when it accumulates in mitochondrion. It is a highly efficient protease, at least toward amyloid-beta protein 40. Cleaves that peptide at a specific position and is probably not processive, releasing digested peptides intermediates that can be further cleaved subsequently. It is also able to degrade amyloid-beta protein 42. The sequence is that of Presequence protease, mitochondrial from Pongo abelii (Sumatran orangutan).